The following is a 157-amino-acid chain: Histone H2B.3 (157 aa).

Residues 1-64 form a disordered region; the sequence is MAPKKEEKPA…DKKSKKKAKV (64 aa). Residues 26–42 are compositionally biased toward basic residues; the sequence is KAVKAPKKKEKKAPAKK. Lys153 is covalently cross-linked (Glycyl lysine isopeptide (Lys-Gly) (interchain with G-Cter in ubiquitin)).

The protein belongs to the histone H2B family. The nucleosome is a histone octamer containing two molecules each of H2A, H2B, H3 and H4 assembled in one H3-H4 heterotetramer and two H2A-H2B heterodimers. The octamer wraps approximately 147 bp of DNA. Post-translationally, monoubiquitinated to form H2BK143ub1; may give a specific tag for epigenetic transcriptional activation.

The protein localises to the nucleus. Its subcellular location is the chromosome. Functionally, core component of nucleosome. Nucleosomes wrap and compact DNA into chromatin, limiting DNA accessibility to the cellular machineries which require DNA as a template. Histones thereby play a central role in transcription regulation, DNA repair, DNA replication and chromosomal stability. DNA accessibility is regulated via a complex set of post-translational modifications of histones, also called histone code, and nucleosome remodeling. The sequence is that of Histone H2B.3 from Volvox carteri (Green alga).